Here is a 215-residue protein sequence, read N- to C-terminus: Peroxiredoxin-5, mitochondrial (215 aa).

A mitochondrion-targeting transit peptide spans 1–53 (MGLAGVCVLRRSAGYILGGAAGQSVAATAAARRRSEGGWASGGVRSFSRAAAA). Residues 57–215 (IKVGDAIPAV…SLAPSIISQL (159 aa)) form the Thioredoxin domain. An N6-acetyllysine modification is found at Lys76. At Lys84 the chain carries N6-acetyllysine; alternate. The residue at position 84 (Lys84) is an N6-succinyllysine; alternate. Cys101 acts as the Cysteine sulfenic acid (-SOH) intermediate in catalysis. Cys101 carries S-palmitoyl cysteine lipidation. Cys101 and Cys205 form a disulfide bridge. Lys117 carries the post-translational modification N6-succinyllysine. Phosphoserine is present on residues Ser172 and Ser183. Residues 213–215 (SQL) carry the Microbody targeting signal motif.

It belongs to the peroxiredoxin family. Prx5 subfamily. In terms of assembly, monomer. In terms of processing, S-palmitoylated. Palmitoylation occurs on the active site, inhibiting its reactivity; therefore PRDX5 palmitoylation status determines its antioxidant capacity. S-palmitoylated. Depalmitoylated by ABHD10.

The protein resides in the mitochondrion. It is found in the cytoplasm. Its subcellular location is the peroxisome matrix. It carries out the reaction a hydroperoxide + [thioredoxin]-dithiol = an alcohol + [thioredoxin]-disulfide + H2O. Its function is as follows. Thiol-specific peroxidase that catalyzes the reduction of hydrogen peroxide and organic hydroperoxides to water and alcohols, respectively. Plays a role in cell protection against oxidative stress by detoxifying peroxides and as sensor of hydrogen peroxide-mediated signaling events. This is Peroxiredoxin-5, mitochondrial (PRDX5) from Papio hamadryas (Hamadryas baboon).